The following is a 366-amino-acid chain: Mannonate dehydratase (366 aa).

It belongs to the mannonate dehydratase family. The cofactor is Fe(2+). Requires Mn(2+) as cofactor.

It catalyses the reaction D-mannonate = 2-dehydro-3-deoxy-D-gluconate + H2O. Its pathway is carbohydrate metabolism; pentose and glucuronate interconversion. Its function is as follows. Catalyzes the dehydration of D-mannonate. The chain is Mannonate dehydratase from Streptococcus suis (strain 98HAH33).